Here is a 214-residue protein sequence, read N- to C-terminus: Ornithine decarboxylase antizyme 1 (214 aa).

It belongs to the ODC antizyme family. In terms of assembly, interacts with ODC1 and thereby sterically blocks ODC homodimerization.

Functionally, ornithine decarboxylase (ODC) antizyme protein that negatively regulates ODC activity and intracellular polyamine biosynthesis and uptake in response to increased intracellular polyamine levels. Binds to ODC monomers, inhibiting the assembly of the functional ODC homodimer, and targets the monomers for ubiquitin-independent proteolytic destruction by the 26S proteasome. In Danio rerio (Zebrafish), this protein is Ornithine decarboxylase antizyme 1 (oaz1a).